We begin with the raw amino-acid sequence, 263 residues long: Regulatory protein RecX (263 aa).

It belongs to the RecX family.

The protein resides in the cytoplasm. In terms of biological role, modulates RecA activity. The protein is Regulatory protein RecX of Bacillus licheniformis (strain ATCC 14580 / DSM 13 / JCM 2505 / CCUG 7422 / NBRC 12200 / NCIMB 9375 / NCTC 10341 / NRRL NRS-1264 / Gibson 46).